We begin with the raw amino-acid sequence, 232 residues long: Large ribosomal subunit protein uL1 (232 aa).

This sequence belongs to the universal ribosomal protein uL1 family. Part of the 50S ribosomal subunit.

Binds directly to 23S rRNA. The L1 stalk is quite mobile in the ribosome, and is involved in E site tRNA release. Functionally, protein L1 is also a translational repressor protein, it controls the translation of the L11 operon by binding to its mRNA. The protein is Large ribosomal subunit protein uL1 of Sinorhizobium medicae (strain WSM419) (Ensifer medicae).